The following is a 307-amino-acid chain: Atrochrysone carboxyl ACP thioesterase (307 aa).

4 residues coordinate Zn(2+): H104, H106, D108, and H109. The Proton donor/acceptor role is filled by D108.

It belongs to the metallo-beta-lactamase superfamily. The cofactor is Zn(2+).

The enzyme catalyses atrochrysone carboxyl-[ACP] + H2O = atrochrysone carboxylate + holo-[ACP] + H(+). Its pathway is secondary metabolite biosynthesis. Atrochrysone carboxyl ACP thioesterase; part of the gene cluster that mediates the biosynthesis of monodictyphenone, a prenyl xanthone derivative. The pathway begins with the synthesis of atrochrysone thioester by the polyketide synthase (PKS) mdpG. The atrochrysone carboxyl ACP thioesterase mdpF then breaks the thioester bond and releases the atrochrysone carboxylic acid from mdpG. The atrochrysone carboxylic acid is then converted to atrochrysone which is further transformed into emodin anthrone. The next step is performed by the anthrone oxygenase mdpH that catalyzes the oxidation of emodinanthrone to emodin. Emodin is further modified to yield monodictyphenone via several steps involving mdpB, mdpC mdpJ, mdpK and mdpL. The short chain dehydrogenase mdpC converts the tautomers of emodin hydroquinone into the 3-hydroxy-3,4-dihydroan-thracen-1(2H)-one derivative. These enzymes with xptA, xptB and xptC are also proposed to be involved in the synthesis of shamixanthone from emodin. Especially, direct reduction of emodin by the short chain dehydrogenase mdpC followed by dehydration catalyzed by the scytalone dehydratase-like protein mdpB gives loss of oxygen and formation of chrysophanol intermediate in two simple steps. This is Atrochrysone carboxyl ACP thioesterase from Emericella nidulans (strain FGSC A4 / ATCC 38163 / CBS 112.46 / NRRL 194 / M139) (Aspergillus nidulans).